The primary structure comprises 82 residues: High-potential iron-sulfur protein (82 aa).

[4Fe-4S] cluster is bound by residues Cys42, Cys45, Cys60, and Cys74.

The protein belongs to the high-potential iron-sulfur protein (HiPIP) family. In terms of assembly, homodimer.

Its subcellular location is the periplasm. Its function is as follows. Specific class of high-redox-potential 4Fe-4S ferredoxins. Functions in anaerobic electron transport in most purple and in some other photosynthetic bacteria and in at least one genus (Paracoccus) of halophilic, denitrifying bacteria. The sequence is that of High-potential iron-sulfur protein (hip) from Marichromatium purpuratum (Chromatium purpuratum).